A 155-amino-acid polypeptide reads, in one-letter code: Urease accessory protein UreE (155 aa).

It belongs to the UreE family.

The protein localises to the cytoplasm. In terms of biological role, involved in urease metallocenter assembly. Binds nickel. Probably functions as a nickel donor during metallocenter assembly. The protein is Urease accessory protein UreE of Synechococcus sp. (strain CC9311).